A 1075-amino-acid polypeptide reads, in one-letter code: DNA-directed RNA polymerase subunit beta (1075 aa).

Belongs to the RNA polymerase beta chain family. In terms of assembly, in plastids the minimal PEP RNA polymerase catalytic core is composed of four subunits: alpha, beta, beta', and beta''. When a (nuclear-encoded) sigma factor is associated with the core the holoenzyme is formed, which can initiate transcription.

Its subcellular location is the plastid. The protein resides in the chloroplast. The enzyme catalyses RNA(n) + a ribonucleoside 5'-triphosphate = RNA(n+1) + diphosphate. Its function is as follows. DNA-dependent RNA polymerase catalyzes the transcription of DNA into RNA using the four ribonucleoside triphosphates as substrates. This is DNA-directed RNA polymerase subunit beta from Zea mays (Maize).